A 311-amino-acid polypeptide reads, in one-letter code: p-hydroxybenzoic acid efflux pump subunit AaeA (311 aa).

The helical transmembrane segment at Val11–Phe31 threads the bilayer.

Belongs to the membrane fusion protein (MFP) (TC 8.A.1) family.

The protein localises to the cell inner membrane. Functionally, forms an efflux pump with AaeB. The sequence is that of p-hydroxybenzoic acid efflux pump subunit AaeA from Yersinia pseudotuberculosis serotype O:1b (strain IP 31758).